A 377-amino-acid chain; its full sequence is Mitochondrial pyrimidine nucleotide transporter RIM2 (377 aa).

3 Solcar repeats span residues 50 to 163 (VKPW…TKDM), 173 to 262 (ETPM…MKRL), and 286 to 375 (KEWC…VIRL). The next 6 helical transmembrane spans lie at 53–73 (WVHF…TCPF), 131–151 (GFRS…PARS), 179–199 (LMAA…IWLI), 238–258 (GLSA…LYEQ), 286–306 (KEWC…SIAT), and 347–368 (MYSG…MFGT).

This sequence belongs to the mitochondrial carrier (TC 2.A.29) family.

The protein localises to the mitochondrion inner membrane. The enzyme catalyses 5-methyl-UTP(out) + UTP(in) = 5-methyl-UTP(in) + UTP(out). Mitochondrial transporter that imports/exports pyrimidine nucleotides into and from mitochondria. Selectively transports uridine, thymidine, and cytosine (deoxy)nucleoside di- and triphosphates by an antiport mechanism. Also transports, with lower efficiency, uridine, thymidine, and cytosine (deoxy)nucleoside monophosphates as well as guanosine (deoxy)nucleoside di- and triphosphate. May import (deoxy)nucleoside triphosphates in exchange for intramitochondrial (deoxy)nucleoside monophosphates, thus providing precursors necessary for de novo synthesis of mitochondrial DNA and RNA while exporting products of their catabolism. Mediates the transport of iron and other divalent metal ions like copper and zinc across the mitochondrial inner membrane in a pyrimidine nucleotide-dependent fashion. Catalyzes the co-import of pyrimidine nucleotides and divalent metal ions including ferrous iron. Participates in mitochondrial genome maintenance, regulation of mitochondrial membrane potential and mitochondrial respiration. This chain is Mitochondrial pyrimidine nucleotide transporter RIM2 (RIM2), found in Saccharomyces cerevisiae (strain ATCC 204508 / S288c) (Baker's yeast).